The chain runs to 316 residues: MSSQLEQLKAYTTVVADTGDFKQIAAFAPRDATTNPSLILKAVSQPAYAPLLAQTAAAHRGQPLDAIVDRVLVRFGCEILNVVPGRVSTEVDARLSFDAAATVARAQRIMALYESEGIARERVLIKIAATWEGIQAAKALEHHGIHCNLTLLFAFCQAVACGESGVRLISPFVGRIHDWHKKAAGARWDEAANAGANDPGVKSVAQIWRYFRKFGIETEVMGASFRNTGQILALAGCDLLTISPELLAQLQASEATVMRALDVDAALHCDAKALSFNEASFRYALNEDAMATEKLAEGIRAFAVDAAQLDRLIQAL.

Lys126 acts as the Schiff-base intermediate with substrate in catalysis.

This sequence belongs to the transaldolase family. Type 1 subfamily. Homodimer.

Its subcellular location is the cytoplasm. It carries out the reaction D-sedoheptulose 7-phosphate + D-glyceraldehyde 3-phosphate = D-erythrose 4-phosphate + beta-D-fructose 6-phosphate. It participates in carbohydrate degradation; pentose phosphate pathway; D-glyceraldehyde 3-phosphate and beta-D-fructose 6-phosphate from D-ribose 5-phosphate and D-xylulose 5-phosphate (non-oxidative stage): step 2/3. Its function is as follows. Transaldolase is important for the balance of metabolites in the pentose-phosphate pathway. This is Transaldolase from Methylibium petroleiphilum (strain ATCC BAA-1232 / LMG 22953 / PM1).